We begin with the raw amino-acid sequence, 153 residues long: ATP synthase subunit b' (153 aa).

The chain crosses the membrane as a helical span at residues 23-40; it reads LMAIQVVALTYILNSLFF.

The protein belongs to the ATPase B chain family. As to quaternary structure, F-type ATPases have 2 components, F(1) - the catalytic core - and F(0) - the membrane proton channel. F(1) has five subunits: alpha(3), beta(3), gamma(1), delta(1), epsilon(1). F(0) has four main subunits: a(1), b(1), b'(1) and c(10-14). The alpha and beta chains form an alternating ring which encloses part of the gamma chain. F(1) is attached to F(0) by a central stalk formed by the gamma and epsilon chains, while a peripheral stalk is formed by the delta, b and b' chains.

Its subcellular location is the cellular thylakoid membrane. F(1)F(0) ATP synthase produces ATP from ADP in the presence of a proton or sodium gradient. F-type ATPases consist of two structural domains, F(1) containing the extramembraneous catalytic core and F(0) containing the membrane proton channel, linked together by a central stalk and a peripheral stalk. During catalysis, ATP synthesis in the catalytic domain of F(1) is coupled via a rotary mechanism of the central stalk subunits to proton translocation. Functionally, component of the F(0) channel, it forms part of the peripheral stalk, linking F(1) to F(0). The b'-subunit is a diverged and duplicated form of b found in plants and photosynthetic bacteria. The polypeptide is ATP synthase subunit b' (Prochlorococcus marinus (strain MIT 9515)).